We begin with the raw amino-acid sequence, 634 residues long: MTNSNLRTENHFDYVKITLASPDRVMEWGQRTLPNGQVVGEVTKPETINYRTLKPEMDGLFCEKIFGPSKDWECHCGKYKRVRHRGIVCERCGVEVTESRVRRHRMGFIKLAAPVSHVWYLKGIPSYVAILLDMPLRDVEQIVYFNCYVVLDPGDHKELKYKQLLTEDEWLEIEDEIYAEDSTIENEPMVGIGAEALKQLLEDLDLPDVAEQLREEISSSKGQKRAKLIKRLRVIDNFIATNARPEWMVLDAIPVIPPDLRPMVQLDGGRFATSDLNDLYRRVINRNNRLARLQEILAPEIIVRNEKRMLQEAVDALIDNGRRGRTVVGANNRPLKSLSDIIEGKQGRFRQNLLGKRVDYSGRSVIVVGPKLKMHQCGLPKEMAIELFQPFVIHRLIRQNIVNNIKAAKKLIQRADDEVMQVLQEVIEGHPILLNRAPTLHRLGIQAFEPKLVDGRAIQLHPLVCPAFNADFDGDQMAVHVPLAIESQTEARMLMLASNNILSPATGDPIITPSQDMVLGSYYLTALKPGASVPEFGDQSRTYSGLEDVIHAFEDKRILLHDWVWVRFNGEVEDEDEIEEPIKAELLSDGTRIEQWTYRRDRFDEDGALISRYILTTVGRVVMNYTIIDAVAVA.

Zn(2+) contacts are provided by Cys74, Cys76, Cys89, and Cys92. Residues Asp471, Asp473, and Asp475 each contribute to the Mg(2+) site.

This sequence belongs to the RNA polymerase beta' chain family. RpoC1 subfamily. In cyanobacteria the RNAP catalytic core is composed of 2 alpha, 1 beta, 1 beta', 1 gamma and 1 omega subunit. When a sigma factor is associated with the core the holoenzyme is formed, which can initiate transcription. Requires Mg(2+) as cofactor. The cofactor is Zn(2+).

It carries out the reaction RNA(n) + a ribonucleoside 5'-triphosphate = RNA(n+1) + diphosphate. DNA-dependent RNA polymerase catalyzes the transcription of DNA into RNA using the four ribonucleoside triphosphates as substrates. The protein is DNA-directed RNA polymerase subunit gamma of Prochlorococcus marinus (strain MIT 9313).